The chain runs to 152 residues: Phospholipase A2 GL16-1 (152 aa).

Residues 1–21 (MNPAHLLVLLAVCVSLLGAST) form the signal peptide. Residues 22–27 (IPPLPL) constitute a propeptide that is removed on maturation. 7 disulfide bridges follow: cysteine 38-cysteine 104, cysteine 54-cysteine 151, cysteine 56-cysteine 72, cysteine 71-cysteine 132, cysteine 78-cysteine 125, cysteine 88-cysteine 118, and cysteine 111-cysteine 123. Tyrosine 55, glycine 57, and glycine 59 together coordinate Ca(2+). Histidine 75 is a catalytic residue. Ca(2+) is bound at residue aspartate 76. Aspartate 126 is a catalytic residue.

The protein belongs to the phospholipase A2 family. Group I subfamily. It depends on Ca(2+) as a cofactor.

The protein resides in the secreted. It carries out the reaction a 1,2-diacyl-sn-glycero-3-phosphocholine + H2O = a 1-acyl-sn-glycero-3-phosphocholine + a fatty acid + H(+). Functionally, PA2 catalyzes the calcium-dependent hydrolysis of the 2-acyl groups in 3-sn-phosphoglycerides. This Laticauda semifasciata (Black-banded sea krait) protein is Phospholipase A2 GL16-1.